The chain runs to 280 residues: Borealin (280 aa).

A required for interaction with INCENP region spans residues 1–58 (MAPRKGSSRVAKTNSLRRRKLASFLKDFDREVEIRIKQIESDRQNLLKEVDNLYNIEI). A required for centromere localization region spans residues 1-88 (MAPRKGSSRV…NKQALEEAAT (88 aa)). Positions 1–140 (MAPRKGSSRV…ENERKNLQTA (140 aa)) are required for interaction with SENP3. The tract at residues 10-109 (VAKTNSLRRR…TAEAIQTPLK (100 aa)) is required to form a minimal CPC core complex that localizes to the central spindle and midbody and properly executes the role of the CPC during cytokinesis. The tract at residues 20-78 (KLASFLKDFDREVEIRIKQIESDRQNLLKEVDNLYNIEILRLPKALREMNWLDYFALGG) is required for interaction with INCENP and BIRC5. 2 positions are modified to phosphothreonine; by TTK: Thr-88 and Thr-94. Thr-106 bears the Phosphothreonine mark. Ser-110 carries the phosphoserine modification. Residues 130 to 169 (EENERKNLQTARVKRCPPSKKRTQSIQGKGKGKRSSRANT) form a disordered region. A Glycyl lysine isopeptide (Lys-Gly) (interchain with G-Cter in SUMO2) cross-link involves residue Lys-135. A compositionally biased stretch (basic residues) spans 141–152 (RVKRCPPSKKRT). At Ser-165 the chain carries Phosphoserine; by AURKB. Phosphothreonine; by TTK is present on Thr-169. Phosphothreonine occurs at positions 189 and 204. 2 positions are modified to phosphoserine: Ser-219 and Ser-224. The residue at position 230 (Thr-230) is a Phosphothreonine; by TTK. A phosphoserine mark is found at Ser-238 and Ser-244.

Belongs to the borealin family. As to quaternary structure, may form homooligomers and homodimers. Component of the chromosomal passenger complex (CPC) composed of at least BIRC5/survivin, CDCA8/borealin, INCENP, AURKB or AURKC; in the complex forms a triple-helix bundle-based subcomplex with INCENP and BIRC5. Interacts with SENP3, UBE2I and RANBP2. Interacts (phosphorylated) with SGO1 and SGO2; the association is dependent on CDK1. Post-translationally, phosphorylated by TTK, essentially at Thr-88, Thr94, Thr-169 and Thr-230. Phosphorylation (probably by CDK1) promotes targeting of the CPC to centromeric DNA. In terms of processing, sumoylated by UBE2I and RANBP2. Desumoylated by SENP3 through the removal of SUMO2 and SUMO3.

The protein localises to the nucleus. The protein resides in the nucleolus. Its subcellular location is the cytoplasm. It localises to the chromosome. It is found in the centromere. The protein localises to the cytoskeleton. The protein resides in the spindle. Component of the chromosomal passenger complex (CPC), a complex that acts as a key regulator of mitosis. The CPC complex has essential functions at the centromere in ensuring correct chromosome alignment and segregation and is required for chromatin-induced microtubule stabilization and spindle assembly. In the complex, it may be required to direct the CPC to centromeric DNA. The polypeptide is Borealin (CDCA8) (Pongo abelii (Sumatran orangutan)).